The chain runs to 41 residues: Photosystem II reaction center protein Y (41 aa).

The residue at position 1 (Met-1) is an N-formylmethionine. The Lumenal segment spans residues 1 to 4; that stretch reads MDWR. The chain crosses the membrane as a helical span at residues 5-23; that stretch reads VLVVLLPVLLAAGWAVRNI. The Cytoplasmic portion of the chain corresponds to 24–41; the sequence is LPYAVKQVQKLLQKAKAA.

The protein belongs to the PsbY family. PSII is composed of 1 copy each of membrane proteins PsbA, PsbB, PsbC, PsbD, PsbE, PsbF, PsbH, PsbI, PsbJ, PsbK, PsbL, PsbM, PsbT, PsbX, PsbY, PsbZ, Psb30/Ycf12, peripheral proteins PsbO, CyanoQ (PsbQ), PsbU, PsbV and a large number of cofactors. It forms dimeric complexes. This protein is only loosely associated with PSII, and is not often found in crystals. Found on the exterior of the PSII dimer, near cytochrome b559 (psbE and psbF). PSII binds multiple chlorophylls, carotenoids and specific lipids. is required as a cofactor.

It localises to the cellular thylakoid membrane. In terms of biological role, loosely associated component of the core of photosystem II, it is not always seen in crystals. PSII is a light-driven water plastoquinone oxidoreductase, using light energy to abstract electrons from H(2)O, generating a proton gradient subsequently used for ATP formation. In Thermosynechococcus vestitus (strain NIES-2133 / IAM M-273 / BP-1), this protein is Photosystem II reaction center protein Y.